A 1922-amino-acid polypeptide reads, in one-letter code: Endoribonuclease Dicer (1922 aa).

Residues 51-227 form the Helicase ATP-binding domain; the sequence is LLEAALDHNT…ELEEKIQKLE (177 aa). 64 to 71 lines the ATP pocket; that stretch reads LNTGSGKT. The short motif at 175-178 is the DECH box element; it reads DECH. The segment at 256–595 is required for interaction with PRKRA and TARBP2; that stretch reads DCGPFTDRSG…LRNKCSKSVD (340 aa). Residues 409–433 form a disordered region; that stretch reads YVSWSDSEDDDEDEEIEEKEKPETN. Ser-413 and Ser-415 each carry phosphoserine. The span at 414-425 shows a compositional bias: acidic residues; the sequence is DSEDDDEDEEIE. Residues 433–602 enclose the Helicase C-terminal domain; the sequence is NFPSPFTNIL…SVDTGETDID (170 aa). The Dicer dsRNA-binding fold domain maps to 630–722; it reads AIGHINRYCA…MPVGKETVKY (93 aa). In terms of domain architecture, PAZ spans 895–1042; that stretch reads KFMEDIEKSE…LVPELCAIHP (148 aa). Ser-1016 and Ser-1160 each carry phosphoserine. Positions 1276 to 1403 constitute an RNase III 1 domain; the sequence is DSEQSPSIGY…TDKWEKDEMT (128 aa). Mg(2+) contacts are provided by Glu-1316, Asp-1395, and Glu-1398. Phosphoserine occurs at positions 1460, 1468, and 1470. Positions 1666–1824 constitute an RNase III 2 domain; that stretch reads FENFEKKINY…LAGAIYMDSG (159 aa). Glu-1705, Asp-1810, and Glu-1813 together coordinate Mg(2+). Positions 1849-1914 constitute a DRBM domain; it reads VPRSPVRELL…ARRALRSLKA (66 aa). Ser-1868 carries the phosphoserine modification.

Belongs to the helicase family. Dicer subfamily. In terms of assembly, component of the RISC loading complex (RLC), or micro-RNA (miRNA) loading complex (miRLC), which is composed of DICER1, AGO2 and TARBP2; DICER1 and TARBP2 are required to process precursor miRNAs (pre-miRNAs) to mature miRNAs and then load them onto AGO2. Note that the trimeric RLC/miRLC is also referred to as RISC. Interacts with DHX9, AGO1, PIWIL1 and PRKRA. Associates with the 60S ribosome. Interacts with BCDIN3D. Interacts with AGO2, TARBP2, EIF6, MOV10 and RPL7A (60S ribosome subunit); they form a large RNA-induced silencing complex (RISC). Interacts (via Dicer dsRNA-binding fold domain) with ALOX5 (via PLAT domain); this interaction enhances arachidonate 5-lipoxygenase activity and modifies the miRNA precursor processing activity of DICER1. As to quaternary structure, (Microbial infection) Interacts with ebolavirus transcriptional activator VP30; this interaction prevents TARBP2/TRBP binding to DICER1 and thus allows the virus to counteract host RNA silencing. (Microbial infection) Interacts with ebolavirus transcriptional activator VP35; this interaction prevents TARBP2/TRBP binding to DICER1 and thus allows the virus to counteract host RNA silencing. The cofactor is Mg(2+). Mn(2+) is required as a cofactor.

The protein localises to the cytoplasm. It localises to the perinuclear region. The enzyme catalyses Endonucleolytic cleavage to 5'-phosphomonoester.. Double-stranded RNA (dsRNA) endoribonuclease playing a central role in short dsRNA-mediated post-transcriptional gene silencing. Cleaves naturally occurring long dsRNAs and short hairpin pre-microRNAs (miRNA) into fragments of twenty-one to twenty-three nucleotides with 3' overhang of two nucleotides, producing respectively short interfering RNAs (siRNA) and mature microRNAs. SiRNAs and miRNAs serve as guide to direct the RNA-induced silencing complex (RISC) to complementary RNAs to degrade them or prevent their translation. Gene silencing mediated by siRNAs, also called RNA interference, controls the elimination of transcripts from mobile and repetitive DNA elements of the genome but also the degradation of exogenous RNA of viral origin for instance. The miRNA pathway on the other side is a mean to specifically regulate the expression of target genes. The polypeptide is Endoribonuclease Dicer (DICER1) (Homo sapiens (Human)).